The following is a 239-amino-acid chain: Myogenic factor 6 (239 aa).

Residues 27–64 (QHLDMPGVSPLYDGNHSPLSPGPDNVPSETGGESSGDE) form a disordered region. Residues 96 to 147 (DRRKAATLRERRRLKKINEAFDALKRKSVANPNQRLPKVEILRSAISYIERL) form the bHLH domain. Positions 155–184 (DEQERGQSGASDTRNDKEQNRPSGGDYCWK) are disordered.

As to quaternary structure, efficient DNA binding requires dimerization with another bHLH protein.

Its subcellular location is the nucleus. Functionally, involved in muscle differentiation (myogenic factor). Induces fibroblasts to differentiate into myoblasts. Probable sequence specific DNA-binding protein. The sequence is that of Myogenic factor 6 (myf6) from Tetraodon nigroviridis (Spotted green pufferfish).